The chain runs to 297 residues: Phosphatidylserine decarboxylase proenzyme (297 aa).

Active-site charge relay system; for autoendoproteolytic cleavage activity residues include Asp-100, His-157, and Ser-263. Ser-263 acts as the Schiff-base intermediate with substrate; via pyruvic acid; for decarboxylase activity in catalysis. Residue Ser-263 is modified to Pyruvic acid (Ser); by autocatalysis.

Belongs to the phosphatidylserine decarboxylase family. PSD-B subfamily. Prokaryotic type I sub-subfamily. Heterodimer of a large membrane-associated beta subunit and a small pyruvoyl-containing alpha subunit. Requires pyruvate as cofactor. In terms of processing, is synthesized initially as an inactive proenzyme. Formation of the active enzyme involves a self-maturation process in which the active site pyruvoyl group is generated from an internal serine residue via an autocatalytic post-translational modification. Two non-identical subunits are generated from the proenzyme in this reaction, and the pyruvate is formed at the N-terminus of the alpha chain, which is derived from the carboxyl end of the proenzyme. The autoendoproteolytic cleavage occurs by a canonical serine protease mechanism, in which the side chain hydroxyl group of the serine supplies its oxygen atom to form the C-terminus of the beta chain, while the remainder of the serine residue undergoes an oxidative deamination to produce ammonia and the pyruvoyl prosthetic group on the alpha chain. During this reaction, the Ser that is part of the protease active site of the proenzyme becomes the pyruvoyl prosthetic group, which constitutes an essential element of the active site of the mature decarboxylase.

It is found in the cell membrane. It carries out the reaction a 1,2-diacyl-sn-glycero-3-phospho-L-serine + H(+) = a 1,2-diacyl-sn-glycero-3-phosphoethanolamine + CO2. It functions in the pathway phospholipid metabolism; phosphatidylethanolamine biosynthesis; phosphatidylethanolamine from CDP-diacylglycerol: step 2/2. In terms of biological role, catalyzes the formation of phosphatidylethanolamine (PtdEtn) from phosphatidylserine (PtdSer). The protein is Phosphatidylserine decarboxylase proenzyme of Glaesserella parasuis serovar 5 (strain SH0165) (Haemophilus parasuis).